Reading from the N-terminus, the 665-residue chain is Ribonuclease R 2 (665 aa).

Positions 202 to 528 constitute an RNB domain; sequence REDYRNEITY…LIIHRLLHLY (327 aa). Residues 579–662 form the S1 motif domain; the sequence is GEVYTGTITG…RKGTVDFEQI (84 aa).

It belongs to the RNR ribonuclease family. RNase R subfamily.

It localises to the cytoplasm. It catalyses the reaction Exonucleolytic cleavage in the 3'- to 5'-direction to yield nucleoside 5'-phosphates.. Its function is as follows. 3'-5' exoribonuclease that releases 5'-nucleoside monophosphates and is involved in maturation of structured RNAs. This Lactococcus lactis subsp. lactis (strain IL1403) (Streptococcus lactis) protein is Ribonuclease R 2.